Consider the following 570-residue polypeptide: Urease subunit alpha (570 aa).

A Urease domain is found at 131 to 570 (GGFDSHIHFI…LPMAQRYFLF (440 aa)). Ni(2+) is bound by residues His-136, His-138, and Lys-219. N6-carboxylysine is present on Lys-219. Residue His-221 coordinates substrate. Residues His-248 and His-274 each coordinate Ni(2+). Residue His-322 is the Proton donor of the active site. Asp-362 serves as a coordination point for Ni(2+).

The protein belongs to the metallo-dependent hydrolases superfamily. Urease alpha subunit family. In terms of assembly, heterotrimer of UreA (gamma), UreB (beta) and UreC (alpha) subunits. Three heterotrimers associate to form the active enzyme. Requires Ni cation as cofactor. Post-translationally, carboxylation allows a single lysine to coordinate two nickel ions.

The protein localises to the cytoplasm. The catalysed reaction is urea + 2 H2O + H(+) = hydrogencarbonate + 2 NH4(+). Its pathway is nitrogen metabolism; urea degradation; CO(2) and NH(3) from urea (urease route): step 1/1. The polypeptide is Urease subunit alpha (Beijerinckia indica subsp. indica (strain ATCC 9039 / DSM 1715 / NCIMB 8712)).